The sequence spans 177 residues: Protein FATTY ACID EXPORT 4, chloroplastic (177 aa).

The N-terminal 63 residues, methionine 1–valine 63, are a transit peptide targeting the chloroplast. The next 3 membrane-spanning stretches (helical) occupy residues lysine 85–threonine 105, arginine 111–phenylalanine 131, and valine 140–tyrosine 160.

The protein belongs to the TMEM14 family.

The protein localises to the plastid. It localises to the chloroplast membrane. In terms of biological role, may be involved in free fatty acids export from the plastids. This Arabidopsis thaliana (Mouse-ear cress) protein is Protein FATTY ACID EXPORT 4, chloroplastic.